A 1876-amino-acid chain; its full sequence is Phenolphthiocerol/phthiocerol polyketide synthase subunit A (1876 aa).

The Carrier 1 domain occupies 9 to 83 (ADLRHWLIDY…ALAAYLAAPE (75 aa)). Ser-43 is subject to O-(pantetheine 4'-phosphoryl)serine. The Ketosynthase family 3 (KS3) domain maps to 101 to 526 (DEPIAVVGMG…GTNAHVVIEQ (426 aa)). Active-site for beta-ketoacyl synthase activity residues include Cys-273, His-408, and His-448. Residues 626 to 950 (SPGPGTVFVY…NLNKAHTIHP (325 aa)) form an acyltransferase region. Ser-720 (for malonyltransferase activity) is an active-site residue. The tract at residues 997 to 1112 (HTTVATVSAS…AQLSSSPSDS (116 aa)) is N-terminal hotdog fold. Residues 997–1267 (HTTVATVSAS…YRALDFGLDV (271 aa)) enclose the PKS/mFAS DH domain. His-1027 (proton acceptor; for dehydratase activity) is an active-site residue. Residues 1102-1130 (TAQLSSSPSDSASSLNEHHRANGQPPERA) form a disordered region. Low complexity predominate over residues 1106 to 1115 (SSSPSDSASS). Residues 1130-1267 (AHRDLIPDLA…YRALDFGLDV (138 aa)) form a C-terminal hotdog fold region. The active-site Proton donor; for dehydratase activity is Asp-1186. NADP(+) is bound at residue 1491–1551 (AAYLITGGLG…RRRIDAIRAL (61 aa)). The beta-ketoacyl reductase stretch occupies residues 1491-1728 (AAYLITGGLG…DGYDVAQAVV (238 aa)). Positions 1759 to 1836 (EVRSELEQGL…SLASYLAKRV (78 aa)) constitute a Carrier 2 domain. Ser-1796 is subject to O-(pantetheine 4'-phosphoryl)serine.

NADP(+) is required as a cofactor. The cofactor is pantetheine 4'-phosphate.

It carries out the reaction icosanoyl-[(phenol)carboxyphthiodiolenone synthase] + 2 (S)-methylmalonyl-CoA + 3 malonyl-CoA + 5 NADPH + 10 H(+) = C32-carboxyphthiodiolenone-[(phenol)carboxyphthiodiolenone synthase] + 5 CO2 + 5 NADP(+) + 5 CoA + 2 H2O. The catalysed reaction is docosanoyl-[(phenol)carboxyphthiodiolenone synthase] + 2 (S)-methylmalonyl-CoA + 3 malonyl-CoA + 5 NADPH + 10 H(+) = C34-carboxyphthiodiolenone-[(phenol)carboxyphthiodiolenone synthase] + 5 CO2 + 5 NADP(+) + 5 CoA + 2 H2O. The enzyme catalyses 17-(4-hydroxyphenyl)heptadecanoyl-[(phenol)carboxyphthiodiolenone synthase] + 2 (S)-methylmalonyl-CoA + 3 malonyl-CoA + 5 NADPH + 10 H(+) = C35-(phenol)carboxyphthiodiolenone-[(phenol)carboxyphthiodiolenone synthase] + 5 CO2 + 5 NADP(+) + 5 CoA + 2 H2O. It catalyses the reaction 19-(4-hydroxyphenyl)nonadecanoyl-[(phenol)carboxyphthiodiolenone synthase] + 2 (S)-methylmalonyl-CoA + 3 malonyl-CoA + 5 NADPH + 10 H(+) = C37-(phenol)carboxyphthiodiolenone-[(phenol)carboxyphthiodiolenone synthase] + 5 CO2 + 5 NADP(+) + 5 CoA + 2 H2O. Its pathway is lipid metabolism; fatty acid biosynthesis. Its function is as follows. Part of the PpsABCDE complex involved in the biosynthesis of the lipid core common to phthiocerols and phenolphthiocerols by successive additions of malonyl-CoA or methylmalonyl-CoA extender units. PpsA can accept as substrate the activated forms of either icosanoyl (C20), docosanoyl (C22) or lignoceroyl (C24) groups from FadD26, or a (4-hydroxyphenyl)-C17 or (4-hydroxyphenyl)-C19 fatty acyl from FadD29. PpsA initiates the biosynthesis and extends its substrate using a malonyl-CoA extender unit. The PpsB and PpsC proteins add the second and third malonyl-CoA extender units. PpsD adds an (R)-methylmalonyl unit and PpsE adds a second (R)-methylmalonyl unit. The incorporation of the methylmalonyl units results in formation of two branched methyl groups in the elongated product. The polypeptide is Phenolphthiocerol/phthiocerol polyketide synthase subunit A (ppsA) (Mycobacterium tuberculosis (strain CDC 1551 / Oshkosh)).